The primary structure comprises 87 residues: MENKAYMYVLECGDGSLYTGYTTDVQARLKKHQAGKGAKYTRARLPVTLLYQEEHPSKPAAMSAEALFKKKTRQAKLAYIKERTQNA.

In terms of domain architecture, GIY-YIG spans 3-78 (NKAYMYVLEC…KKKTRQAKLA (76 aa)).

The protein belongs to the UPF0213 family.

This Streptococcus sanguinis (strain SK36) protein is UPF0213 protein SSA_0709.